A 1275-amino-acid chain; its full sequence is Rho1 guanine nucleotide exchange factor 3 (1275 aa).

4 disordered regions span residues 1-42, 56-113, 131-188, and 214-248; these read MKLS…SFQK, SPPF…NSAA, NNPL…SPYS, and LSPTRSPARTPSPIRLYSSDALRPQSPLSPSVEYL. Residues 7-17 are compositionally biased toward basic and acidic residues; the sequence is LFHRSSKDHGG. Polar residues-rich tracts occupy residues 32 to 42, 80 to 113, and 142 to 151; these read PHSSSPPSFQK, ASINSRRVASYTVQSSPSRTTYRQLPNEPQNSAA, and SPGNKQNTVD. Composition is skewed to low complexity over residues 178 to 188 and 214 to 228; these read SSVSSHSSPYS and LSPTRSPARTPSPIR. Position 293 is a phosphoserine (S293). The region spanning 465–657 is the DH domain; sequence ARQNNIHELI…RATCEECDAV (193 aa). In terms of domain architecture, PH spans 692–855; it reads EFFFEGIVQR…WVEKINVAKK (164 aa). The CNH domain occupies 930–1239; the sequence is YGDISCIAQF…KYYPSNSDWL (310 aa).

Its subcellular location is the cytoplasm. Functionally, stimulates the exchange of Rho1 GDP-bound form into GTP-bound form. Regulates, via interaction and activation of Rho1, beta-1,3-glucan biosynthesis and cell wall integrity during septation. Involved in the regulation of contractile ring assembly. This Schizosaccharomyces pombe (strain 972 / ATCC 24843) (Fission yeast) protein is Rho1 guanine nucleotide exchange factor 3 (rgf3).